We begin with the raw amino-acid sequence, 363 residues long: Peptide chain release factor 1 (363 aa).

N5-methylglutamine is present on Gln-237.

It belongs to the prokaryotic/mitochondrial release factor family. Post-translationally, methylated by PrmC. Methylation increases the termination efficiency of RF1.

The protein localises to the cytoplasm. Its function is as follows. Peptide chain release factor 1 directs the termination of translation in response to the peptide chain termination codons UAG and UAA. The sequence is that of Peptide chain release factor 1 from Mesoplasma florum (strain ATCC 33453 / NBRC 100688 / NCTC 11704 / L1) (Acholeplasma florum).